A 298-amino-acid chain; its full sequence is Inosose dehydratase (298 aa).

It belongs to the IolE/MocC family. The cofactor is glutathione. Co(2+) is required as a cofactor. It depends on Mn(2+) as a cofactor.

It carries out the reaction scyllo-inosose = 3D-3,5/4-trihydroxycyclohexane-1,2-dione + H2O. Its pathway is polyol metabolism; myo-inositol degradation into acetyl-CoA; acetyl-CoA from myo-inositol: step 2/7. Its function is as follows. Catalyzes the dehydration of inosose (2-keto-myo-inositol, 2KMI or 2,4,6/3,5-pentahydroxycyclohexanone) to 3D-(3,5/4)-trihydroxycyclohexane-1,2-dione (D-2,3-diketo-4-deoxy-epi-inositol). The polypeptide is Inosose dehydratase (Clostridium tetani (strain Massachusetts / E88)).